We begin with the raw amino-acid sequence, 1240 residues long: DNA-directed RNA polymerase subunit beta (1240 aa).

This sequence belongs to the RNA polymerase beta chain family. In terms of assembly, the RNAP catalytic core consists of 2 alpha, 1 beta, 1 beta' and 1 omega subunit. When a sigma factor is associated with the core the holoenzyme is formed, which can initiate transcription.

It catalyses the reaction RNA(n) + a ribonucleoside 5'-triphosphate = RNA(n+1) + diphosphate. In terms of biological role, DNA-dependent RNA polymerase catalyzes the transcription of DNA into RNA using the four ribonucleoside triphosphates as substrates. This Phytoplasma australiense protein is DNA-directed RNA polymerase subunit beta.